The primary structure comprises 261 residues: Ribonuclease PH (261 aa).

Phosphate contacts are provided by residues R88 and 126 to 128; that span reads GTR. Residues 242–261 form a disordered region; it reads PYPGVLPEPKNPEPKKKFGA. Positions 251-261 are enriched in basic and acidic residues; it reads KNPEPKKKFGA.

This sequence belongs to the RNase PH family. As to quaternary structure, homohexameric ring arranged as a trimer of dimers.

The catalysed reaction is tRNA(n+1) + phosphate = tRNA(n) + a ribonucleoside 5'-diphosphate. Its function is as follows. Phosphorolytic 3'-5' exoribonuclease that plays an important role in tRNA 3'-end maturation. Removes nucleotide residues following the 3'-CCA terminus of tRNAs; can also add nucleotides to the ends of RNA molecules by using nucleoside diphosphates as substrates, but this may not be physiologically important. Probably plays a role in initiation of 16S rRNA degradation (leading to ribosome degradation) during starvation. In Rhodococcus erythropolis (strain PR4 / NBRC 100887), this protein is Ribonuclease PH.